The chain runs to 202 residues: MIVKICGLKKAVDVAAAVDNGADMIGFVFAKSKRQVTVEKAHELAKNIPANVKKVGVFVNPTEEELKAAIKGVPLDIVQLHGQEPAKQANRTDAKVIKAFPVKDGKLPTNINDYPNAYILLDAPAEEYEGGSGKTFDWDKINRDMLTKNKLIIAGGLNAQNVQEAIKRFEPYAVDISSGVETNGEKDPEKIKCFIKTAKGVE.

Belongs to the TrpF family.

It catalyses the reaction N-(5-phospho-beta-D-ribosyl)anthranilate = 1-(2-carboxyphenylamino)-1-deoxy-D-ribulose 5-phosphate. Its pathway is amino-acid biosynthesis; L-tryptophan biosynthesis; L-tryptophan from chorismate: step 3/5. This is N-(5'-phosphoribosyl)anthranilate isomerase from Listeria monocytogenes serotype 4b (strain F2365).